Consider the following 670-residue polypeptide: Microtubule-associated protein ssm4 (670 aa).

The CAP-Gly domain occupies 23–65; it reads GSTDFESGIWLGVELLNGKGKNDGSVKGKRYFSCEKGKGIFVR. Coiled-coil stretches lie at residues 209–254 and 404–582; these read KSEL…KNSI and VKTR…KLAD. A Phosphoserine modification is found at Ser460. Thr606 is subject to Phosphothreonine.

Its subcellular location is the cytoplasm. It is found in the cytoskeleton. The protein resides in the spindle. Functionally, binds to nuclear microtubules with the effect of either modifying their structure or function. This then promotes meiotic nuclear division. The polypeptide is Microtubule-associated protein ssm4 (ssm4) (Schizosaccharomyces pombe (strain 972 / ATCC 24843) (Fission yeast)).